A 65-amino-acid polypeptide reads, in one-letter code: DNA-binding protein 7e (65 aa).

Lysine 7 is modified (N6-methyllysine). Residues lysine 63 and lysine 64 each carry the N6-methyllysine; partial modification.

It belongs to the 7 kDa DNA-binding/endoribonuclease P2 family. As to quaternary structure, monomer. Lys-63 was found to be 25% monomethylated and Lys-64 was found to be 36% monomethylated.

It localises to the cytoplasm. Functionally, can constrain negative DNA supercoils. May be involved in maintaining the integrity of the genome at high temperature. The chain is DNA-binding protein 7e from Sulfolobus acidocaldarius (strain ATCC 33909 / DSM 639 / JCM 8929 / NBRC 15157 / NCIMB 11770).